Reading from the N-terminus, the 308-residue chain is uncharacterized protein (308 aa).

Residues 5-236 (LELQQLKKTY…LKSETFILDL (232 aa)) enclose the ABC transporter domain. 38 to 45 (GPNGAGKS) is a binding site for ATP.

Belongs to the ABC transporter superfamily.

This is an uncharacterized protein from Escherichia coli (strain K12).